The chain runs to 276 residues: Transmembrane protein 81 (276 aa).

Positions 1–24 are cleaved as a signal peptide; it reads MKTSATSFIPGSLVLAFCLPVVAT. At 25 to 225 the chain is on the extracellular side; it reads SPKTLAIPEK…QHPPWKKKVA (201 aa). An N-linked (GlcNAc...) asparagine glycan is attached at N45. Residues 83 to 176 form the Ig-like domain; it reads TNWLCGMLHF…NLRLVKRLYF (94 aa). C104 and C160 are joined by a disulfide. N-linked (GlcNAc...) asparagine glycosylation occurs at N211. The helical transmembrane segment at 226-246 threads the bilayer; it reads IAVGIGVAGGVTGGVLVSIVL. Topologically, residues 247-276 are cytoplasmic; that stretch reads CGRLSVIHSSASLETLQALLPKGGMLRKPD.

As to quaternary structure, forms a complex with IZUMO1 and SPACA6 on spermatocyte cell membrane required for fertilization.

The protein resides in the cell membrane. Essential fertilization factor required for male fertility. Part of a conserved trimeric sperm complex with the essential fertilization factors IZUMO1 and SPACA6 which bridges sperm and oocyte membranes during fertilization by binding to IZUMO1R/JUNO on the oocyte. The sequence is that of Transmembrane protein 81 (TMEM81) from Bos taurus (Bovine).